A 142-amino-acid polypeptide reads, in one-letter code: Glutamate-rich protein 2 (142 aa).

Disordered regions lie at residues 1–55 (MSKN…HAPL) and 104–142 (EKAQNLEEDDDESEEDNSESEGESTEDPSEESSDECEDG). The segment covering 9 to 27 (EQEKNNEHCPEDINDKLSE) has biased composition (basic and acidic residues). Residues 28–43 (STDDDGEDTSDEDKEE) are compositionally biased toward acidic residues. Residues 44–53 (DSNPNKDTHA) show a composition bias toward basic and acidic residues. Acidic residues predominate over residues 109 to 142 (LEEDDDESEEDNSESEGESTEDPSEESSDECEDG).

The polypeptide is Glutamate-rich protein 2 (ERICH2) (Bos taurus (Bovine)).